The sequence spans 601 residues: Elongation factor 4 (601 aa).

Residues 7-189 (KNIRNFSIVA…AIVTRLPPPM (183 aa)) form the tr-type G domain. GTP-binding positions include 19–24 (DHGKST) and 136–139 (NKVD).

This sequence belongs to the TRAFAC class translation factor GTPase superfamily. Classic translation factor GTPase family. LepA subfamily.

The protein localises to the cell inner membrane. The catalysed reaction is GTP + H2O = GDP + phosphate + H(+). Its function is as follows. Required for accurate and efficient protein synthesis under certain stress conditions. May act as a fidelity factor of the translation reaction, by catalyzing a one-codon backward translocation of tRNAs on improperly translocated ribosomes. Back-translocation proceeds from a post-translocation (POST) complex to a pre-translocation (PRE) complex, thus giving elongation factor G a second chance to translocate the tRNAs correctly. Binds to ribosomes in a GTP-dependent manner. In Xanthobacter autotrophicus (strain ATCC BAA-1158 / Py2), this protein is Elongation factor 4.